Reading from the N-terminus, the 254-residue chain is 5-oxoprolinase subunit A (254 aa).

The protein belongs to the LamB/PxpA family. As to quaternary structure, forms a complex composed of PxpA, PxpB and PxpC.

It catalyses the reaction 5-oxo-L-proline + ATP + 2 H2O = L-glutamate + ADP + phosphate + H(+). In terms of biological role, catalyzes the cleavage of 5-oxoproline to form L-glutamate coupled to the hydrolysis of ATP to ADP and inorganic phosphate. This chain is 5-oxoprolinase subunit A, found in Burkholderia vietnamiensis (strain G4 / LMG 22486) (Burkholderia cepacia (strain R1808)).